Here is a 325-residue protein sequence, read N- to C-terminus: NADH-quinone oxidoreductase subunit H (325 aa).

A run of 9 helical transmembrane segments spans residues 11 to 31, 50 to 69, 81 to 101, 114 to 134, 154 to 174, 186 to 206, 237 to 257, 265 to 285, and 304 to 324; these read ILLS…CGAF, NRVG…KMFF, VIFT…FAIV, IGIL…LFAG, LSYE…AGSF, IWNV…GVAV, FFVG…TLFF, LPPF…FILI, and VCLP…LWQA.

It belongs to the complex I subunit 1 family. NDH-1 is composed of 13 different subunits. Subunits NuoA, H, J, K, L, M, N constitute the membrane sector of the complex.

The protein resides in the cell inner membrane. It carries out the reaction a quinone + NADH + 5 H(+)(in) = a quinol + NAD(+) + 4 H(+)(out). Functionally, NDH-1 shuttles electrons from NADH, via FMN and iron-sulfur (Fe-S) centers, to quinones in the respiratory chain. The immediate electron acceptor for the enzyme in this species is believed to be ubiquinone. Couples the redox reaction to proton translocation (for every two electrons transferred, four hydrogen ions are translocated across the cytoplasmic membrane), and thus conserves the redox energy in a proton gradient. This subunit may bind ubiquinone. This chain is NADH-quinone oxidoreductase subunit H, found in Citrobacter koseri (strain ATCC BAA-895 / CDC 4225-83 / SGSC4696).